A 174-amino-acid chain; its full sequence is Gamma-crystallin A (174 aa).

Beta/gamma crystallin 'Greek key' domains are found at residues 2–40 (GKIT…RVDS) and 41–83 (GCWM…RSIP). Residues 84–87 (YTSS) are connecting peptide. Beta/gamma crystallin 'Greek key' domains lie at 88–128 (HRIR…HVLE) and 129–171 (GSWV…RRVM).

It belongs to the beta/gamma-crystallin family.

Crystallins are the dominant structural components of the vertebrate eye lens. In Rattus norvegicus (Rat), this protein is Gamma-crystallin A (Cryga).